A 115-amino-acid polypeptide reads, in one-letter code: Cell division topological specificity factor (115 aa).

Residues 93–115 (QLKEPKNQSELDSPETEGTDQKS) form a disordered region. Positions 104–115 (DSPETEGTDQKS) are enriched in acidic residues.

Belongs to the MinE family.

Prevents the cell division inhibition by proteins MinC and MinD at internal division sites while permitting inhibition at polar sites. This ensures cell division at the proper site by restricting the formation of a division septum at the midpoint of the long axis of the cell. The polypeptide is Cell division topological specificity factor (Prochlorococcus marinus (strain NATL1A)).